Here is a 669-residue protein sequence, read N- to C-terminus: UvrABC system protein B (669 aa).

Positions 26–183 (TNFHAGIAKQ…RHLTELQYTR (158 aa)) constitute a Helicase ATP-binding domain. ATP is bound at residue 39-46 (GVTGSGKT). The short motif at 92-115 (YYDYYQPEAYVPASDTFIEKDSSI) is the Beta-hairpin element. Residues 431-597 (QVDDLISQIN…SVVRPISDIL (167 aa)) enclose the Helicase C-terminal domain. Positions 631–666 (AAQMKVLEQKMYQHARDLEFEDAARIRDQIQRLREA) constitute a UVR domain.

Belongs to the UvrB family. In terms of assembly, forms a heterotetramer with UvrA during the search for lesions. Interacts with UvrC in an incision complex.

It localises to the cytoplasm. The UvrABC repair system catalyzes the recognition and processing of DNA lesions. A damage recognition complex composed of 2 UvrA and 2 UvrB subunits scans DNA for abnormalities. Upon binding of the UvrA(2)B(2) complex to a putative damaged site, the DNA wraps around one UvrB monomer. DNA wrap is dependent on ATP binding by UvrB and probably causes local melting of the DNA helix, facilitating insertion of UvrB beta-hairpin between the DNA strands. Then UvrB probes one DNA strand for the presence of a lesion. If a lesion is found the UvrA subunits dissociate and the UvrB-DNA preincision complex is formed. This complex is subsequently bound by UvrC and the second UvrB is released. If no lesion is found, the DNA wraps around the other UvrB subunit that will check the other stand for damage. The sequence is that of UvrABC system protein B from Xylella fastidiosa (strain M23).